The following is a 243-amino-acid chain: 1-(5-phosphoribosyl)-5-[(5-phosphoribosylamino)methylideneamino] imidazole-4-carboxamide isomerase (243 aa).

Asp8 acts as the Proton acceptor in catalysis. Asp130 (proton donor) is an active-site residue.

This sequence belongs to the HisA/HisF family.

It localises to the cytoplasm. It carries out the reaction 1-(5-phospho-beta-D-ribosyl)-5-[(5-phospho-beta-D-ribosylamino)methylideneamino]imidazole-4-carboxamide = 5-[(5-phospho-1-deoxy-D-ribulos-1-ylimino)methylamino]-1-(5-phospho-beta-D-ribosyl)imidazole-4-carboxamide. It participates in amino-acid biosynthesis; L-histidine biosynthesis; L-histidine from 5-phospho-alpha-D-ribose 1-diphosphate: step 4/9. This Acinetobacter baumannii (strain SDF) protein is 1-(5-phosphoribosyl)-5-[(5-phosphoribosylamino)methylideneamino] imidazole-4-carboxamide isomerase.